The sequence spans 609 residues: Replication protein E1 (609 aa).

Residues 81-83 (KRK) carry the Nuclear localization signal motif. Phosphoserine; by host is present on residues Ser-87 and Ser-94. Positions 93-102 (LSPRLQSITI) match the Nuclear export signal motif. Positions 149 to 312 (QGAKGLGIVK…TMINHQSAEA (164 aa)) are DNA-binding region. The SF3 helicase domain maps to 411–561 (INFIRFLDVF…FPFDSNNKPQ (151 aa)). ATP is bound at residue 437–444 (GPPDTGKS). Lys-518 is covalently cross-linked (Glycyl lysine isopeptide (Lys-Gly) (interchain with G-Cter in SUMO)). Residues 584–609 (DQEDEGDDGHTQRSFQCTAREPNGHL) form a disordered region.

It belongs to the papillomaviridae E1 protein family. In terms of assembly, can form hexamers. Interacts with E2 protein; this interaction increases E1 DNA binding specificity. Interacts with host DNA polymerase subunit POLA2. Interacts with host single stranded DNA-binding protein RPA1. Interacts with host TOP1; this interaction stimulates the enzymatic activity of TOP1. In terms of processing, phosphorylated. Sumoylated.

It is found in the host nucleus. The enzyme catalyses Couples ATP hydrolysis with the unwinding of duplex DNA by translocating in the 3'-5' direction.. It catalyses the reaction ATP + H2O = ADP + phosphate + H(+). Functionally, ATP-dependent DNA 3'-5' helicase required for initiation of viral DNA replication. It forms a complex with the viral E2 protein. The E1-E2 complex binds to the replication origin which contains binding sites for both proteins. During the initial step, a dimer of E1 interacts with a dimer of protein E2 leading to a complex that binds the viral origin of replication with high specificity. Then, a second dimer of E1 displaces the E2 dimer in an ATP-dependent manner to form the E1 tetramer. Following this, two E1 monomers are added to each half of the site, which results in the formation of two E1 trimers on the viral ori. Subsequently, two hexamers will be created. The double hexamer acts as a bi-directional helicase machinery and unwinds the viral DNA and then recruits the host DNA polymerase to start replication. This is Replication protein E1 from Human papillomavirus 37.